The primary structure comprises 133 residues: Large ribosomal subunit protein eL19 (133 aa).

The segment at 55–83 is disordered; it reads RGISGARKKPRRKGPGSRKGGKYSKLPRK. Residues 60–83 are compositionally biased toward basic residues; sequence ARKKPRRKGPGSRKGGKYSKLPRK.

This sequence belongs to the eukaryotic ribosomal protein eL19 family. As to quaternary structure, part of the 50S ribosomal subunit.

In terms of biological role, binds to the 23S rRNA. In Korarchaeum cryptofilum (strain OPF8), this protein is Large ribosomal subunit protein eL19.